Consider the following 343-residue polypeptide: MAEQLSPGKTTDQVCTFLFKKPGRKVAAGRRKRPICNQESGDSSSSSDEGNTVVRPEKKRAVHNPMIQKTRGSGKQKVAYGDLSSEEEEENKSESLGVVYKSTRSAKPVGPEDMGATAVYELDTEKERDAQAIFERSQKIQEELRGQEDDKIYRGINNYQKFMKPKDTSMGNASSGMVRKGPIRAPEHLRATVRWDYQPDICKDYKETGFCGFGDSCKFLHDRSDYKHGWQIERELDEGRYGVYEDENYEVGSDEEEIPFKCFICRQTFQNPVVTKCRHYFCESCALQHFRTTPRCYVCDQQTNGVFNPAKELIAKLEKHRAAEGGGASGFPEDPDEDPVPIT.

N-acetylalanine is present on alanine 2. Positions 2–60 (AEQLSPGKTTDQVCTFLFKKPGRKVAAGRRKRPICNQESGDSSSSSDEGNTVVRPEKKR) are important for interaction with SNRNP200/BRR2. A Phosphoserine modification is found at serine 6. The segment covering 23–34 (GRKVAAGRRKRP) has biased composition (basic residues). A disordered region spans residues 23–95 (GRKVAAGRRK…EEEEENKSES (73 aa)). Residues 39–50 (ESGDSSSSSDEG) show a composition bias toward low complexity. Residues 50-61 (GNTVVRPEKKRA) are important for interaction with CXCR4. Phosphoserine is present on residues serine 84 and serine 85. A C3H1-type zinc finger spans residues 196-224 (DYQPDICKDYKETGFCGFGDSCKFLHDRS). The residue at position 253 (serine 253) is a Phosphoserine. Residues 262-300 (CFICRQTFQNPVVTKCRHYFCESCALQHFRTTPRCYVCD) form an RING-type zinc finger. The disordered stretch occupies residues 323 to 343 (AEGGGASGFPEDPDEDPVPIT). A compositionally biased stretch (acidic residues) spans 333 to 343 (EDPDEDPVPIT).

Component of pre-catalytic and catalytic spliceosome complexes. Interacts (via N-terminus) with the spliceosome subunit SNRNP200/BRR2. Component of the minor spliceosome. Within this complex, interacts with SCNM1 and CRIPT.

It is found in the nucleus. It localises to the nucleus speckle. The enzyme catalyses S-ubiquitinyl-[E2 ubiquitin-conjugating enzyme]-L-cysteine + [acceptor protein]-L-lysine = [E2 ubiquitin-conjugating enzyme]-L-cysteine + N(6)-ubiquitinyl-[acceptor protein]-L-lysine.. Its pathway is protein modification; protein ubiquitination. Its function is as follows. Required for pre-mRNA splicing as component of the spliceosome. As a component of the minor spliceosome, involved in the splicing of U12-type introns in pre-mRNAs. E3 ubiquitin-protein ligase that catalyzes the transfer of ubiquitin onto target proteins. Catalyzes polyubiquitination of SNRNP200/BRR2 with non-canonical 'Lys-63'-linked polyubiquitin chains. Plays a role in DNA repair via its role in the synthesis of 'Lys-63'-linked polyubiquitin chains that recruit ALKBH3 and the ASCC complex to sites of DNA damage by alkylating agents. Ubiquitinates CXCR4, leading to its degradation, and thereby contributes to the termination of CXCR4 signaling. In Bos taurus (Bovine), this protein is E3 ubiquitin-protein ligase RNF113A (RNF113A).